The chain runs to 400 residues: NADH-quinone oxidoreductase subunit D (400 aa).

The protein belongs to the complex I 49 kDa subunit family. As to quaternary structure, NDH-1 is composed of 14 different subunits. Subunits NuoB, C, D, E, F, and G constitute the peripheral sector of the complex.

The protein localises to the cell inner membrane. The catalysed reaction is a quinone + NADH + 5 H(+)(in) = a quinol + NAD(+) + 4 H(+)(out). In terms of biological role, NDH-1 shuttles electrons from NADH, via FMN and iron-sulfur (Fe-S) centers, to quinones in the respiratory chain. The immediate electron acceptor for the enzyme in this species is believed to be a menaquinone. Couples the redox reaction to proton translocation (for every two electrons transferred, four hydrogen ions are translocated across the cytoplasmic membrane), and thus conserves the redox energy in a proton gradient. This is NADH-quinone oxidoreductase subunit D from Chlorobium phaeovibrioides (strain DSM 265 / 1930) (Prosthecochloris vibrioformis (strain DSM 265)).